We begin with the raw amino-acid sequence, 303 residues long: Polyisoprenyl-teichoic acid--peptidoglycan teichoic acid transferase TagU (303 aa).

Topologically, residues 1 to 4 (MKKK) are cytoplasmic. The helical; Signal-anchor for type II membrane protein transmembrane segment at 5–25 (ILFWVLGILGVLIIGGGIYAY) threads the bilayer. The Extracellular portion of the chain corresponds to 26–303 (NVYSSVSNTL…KLRTHLEVTK (278 aa)).

The protein belongs to the LytR/CpsA/Psr (LCP) family.

The protein resides in the cell membrane. It participates in cell wall biogenesis. Functionally, may catalyze the final step in cell wall teichoic acid biosynthesis, the transfer of the anionic cell wall polymers (APs) from their lipid-linked precursor to the cell wall peptidoglycan (PG). The polypeptide is Polyisoprenyl-teichoic acid--peptidoglycan teichoic acid transferase TagU (Bacillus anthracis (strain A0248)).